Consider the following 513-residue polypeptide: ATP synthase subunit alpha 2 (513 aa).

169 to 176 (GDRQCGKT) lines the ATP pocket.

It belongs to the ATPase alpha/beta chains family. In terms of assembly, F-type ATPases have 2 components, CF(1) - the catalytic core - and CF(0) - the membrane proton channel. CF(1) has five subunits: alpha(3), beta(3), gamma(1), delta(1), epsilon(1). CF(0) has three main subunits: a(1), b(2) and c(9-12). The alpha and beta chains form an alternating ring which encloses part of the gamma chain. CF(1) is attached to CF(0) by a central stalk formed by the gamma and epsilon chains, while a peripheral stalk is formed by the delta and b chains.

The protein resides in the cell inner membrane. The enzyme catalyses ATP + H2O + 4 H(+)(in) = ADP + phosphate + 5 H(+)(out). Its function is as follows. Produces ATP from ADP in the presence of a proton gradient across the membrane. The alpha chain is a regulatory subunit. This Paraburkholderia xenovorans (strain LB400) protein is ATP synthase subunit alpha 2.